The primary structure comprises 530 residues: GMP synthase [glutamine-hydrolyzing] (530 aa).

The Glutamine amidotransferase type-1 domain occupies 4 to 205 (RILILDYGSQ…VKDICGCEGD (202 aa)). Cys84 functions as the Nucleophile in the catalytic mechanism. Residues His179 and Glu181 contribute to the active site. Positions 206–398 (WNMPDYISEA…LGLPPQMVYR (193 aa)) constitute a GMPS ATP-PPase domain. 233 to 239 (SGGVDSL) contacts ATP.

In terms of assembly, homodimer.

The catalysed reaction is XMP + L-glutamine + ATP + H2O = GMP + L-glutamate + AMP + diphosphate + 2 H(+). It functions in the pathway purine metabolism; GMP biosynthesis; GMP from XMP (L-Gln route): step 1/1. Catalyzes the synthesis of GMP from XMP. The chain is GMP synthase [glutamine-hydrolyzing] from Bordetella parapertussis (strain 12822 / ATCC BAA-587 / NCTC 13253).